Reading from the N-terminus, the 716-residue chain is 1,4-alpha-glucan branching enzyme GlgB (716 aa).

Catalysis depends on D399, which acts as the Nucleophile. Residue E452 is the Proton donor of the active site.

The protein belongs to the glycosyl hydrolase 13 family. GlgB subfamily. As to quaternary structure, monomer.

The enzyme catalyses Transfers a segment of a (1-&gt;4)-alpha-D-glucan chain to a primary hydroxy group in a similar glucan chain.. The protein operates within glycan biosynthesis; glycogen biosynthesis. Functionally, catalyzes the formation of the alpha-1,6-glucosidic linkages in glycogen by scission of a 1,4-alpha-linked oligosaccharide from growing alpha-1,4-glucan chains and the subsequent attachment of the oligosaccharide to the alpha-1,6 position. The sequence is that of 1,4-alpha-glucan branching enzyme GlgB from Rhodopseudomonas palustris (strain BisB5).